The primary structure comprises 481 residues: Wax ester synthase/diacylglycerol acyltransferase 1 (481 aa).

The Cytoplasmic segment spans residues Met1 to Ser185. The active-site Proton acceptor is His147. A helical membrane pass occupies residues Met186 to Val206. Residues Glu207–Val481 are Lumenal-facing.

This sequence in the N-terminal section; belongs to the long-chain O-acyltransferase family. As to expression, expressed in flowers, siliques, top parts of stems, and leaves. Not found in roots, seeds and young seedlings.

The protein localises to the cell membrane. It is found in the endoplasmic reticulum membrane. The catalysed reaction is a long chain fatty alcohol + a fatty acyl-CoA = a wax ester + CoA. It catalyses the reaction an acyl-CoA + a 1,2-diacyl-sn-glycerol = a triacyl-sn-glycerol + CoA. It participates in glycerolipid metabolism; triacylglycerol biosynthesis. It functions in the pathway lipid metabolism. Bifunctional wax ester synthase/diacylglycerol acyltransferase. Involved in cuticular wax biosynthesis. Required to reduce leaf water loss, especially during drought. This chain is Wax ester synthase/diacylglycerol acyltransferase 1, found in Arabidopsis thaliana (Mouse-ear cress).